The primary structure comprises 82 residues: Small ribosomal subunit protein bS16 (82 aa).

The protein belongs to the bacterial ribosomal protein bS16 family.

In Shewanella sp. (strain MR-4), this protein is Small ribosomal subunit protein bS16.